The following is a 150-amino-acid chain: U1 small nuclear ribonucleoprotein C (150 aa).

The Matrin-type zinc-finger motif lies at 4–36 (YYCDYCKSYLTHDTMSVRKSHLQGRNHIKFYCD). The interval 66 to 127 (SDAKKSNGSS…PPNLSGLPLP (62 aa)) is disordered. Residues 80–92 (DIDKKENSSDHNK) are compositionally biased toward basic and acidic residues. Residues 103–112 (NDNDDDDDEM) are compositionally biased toward acidic residues.

The protein belongs to the U1 small nuclear ribonucleoprotein C family. As to quaternary structure, U1 snRNP is composed of the 7 core Sm proteins B/B', D1, D2, D3, E, F and G that assemble in a heptameric protein ring on the Sm site of the small nuclear RNA to form the core snRNP, and at least 3 U1 snRNP-specific proteins U1-70K, U1-A and U1-C. U1-C interacts with U1 snRNA and the 5' splice-site region of the pre-mRNA.

It localises to the nucleus. Component of the spliceosomal U1 snRNP, which is essential for recognition of the pre-mRNA 5' splice-site and the subsequent assembly of the spliceosome. U1-C is directly involved in initial 5' splice-site recognition for both constitutive and regulated alternative splicing. The interaction with the 5' splice-site seems to precede base-pairing between the pre-mRNA and the U1 snRNA. Stimulates commitment or early (E) complex formation by stabilizing the base pairing of the 5' end of the U1 snRNA and the 5' splice-site region. This chain is U1 small nuclear ribonucleoprotein C, found in Candida albicans (strain WO-1) (Yeast).